The primary structure comprises 194 residues: Peptidyl-tRNA hydrolase (194 aa).

TRNA is bound at residue Y17. Catalysis depends on H22, which acts as the Proton acceptor. Residues Y68, N70, and N116 each coordinate tRNA.

The protein belongs to the PTH family. As to quaternary structure, monomer.

It localises to the cytoplasm. The enzyme catalyses an N-acyl-L-alpha-aminoacyl-tRNA + H2O = an N-acyl-L-amino acid + a tRNA + H(+). Its function is as follows. Hydrolyzes ribosome-free peptidyl-tRNAs (with 1 or more amino acids incorporated), which drop off the ribosome during protein synthesis, or as a result of ribosome stalling. Catalyzes the release of premature peptidyl moieties from peptidyl-tRNA molecules trapped in stalled 50S ribosomal subunits, and thus maintains levels of free tRNAs and 50S ribosomes. This chain is Peptidyl-tRNA hydrolase, found in Pseudomonas aeruginosa (strain LESB58).